Consider the following 302-residue polypeptide: uncharacterized protein (302 aa).

This sequence belongs to the HAD-like hydrolase superfamily.

It localises to the cytoplasm. The protein resides in the nucleus. This is an uncharacterized protein from Schizosaccharomyces pombe (strain 972 / ATCC 24843) (Fission yeast).